Here is a 140-residue protein sequence, read N- to C-terminus: Nucleoside diphosphate kinase (140 aa).

Lys-11, Phe-59, Arg-87, Thr-93, Arg-104, and Asn-114 together coordinate ATP. His-117 serves as the catalytic Pros-phosphohistidine intermediate.

The protein belongs to the NDK family. Homotetramer. Requires Mg(2+) as cofactor.

The protein localises to the cytoplasm. It carries out the reaction a 2'-deoxyribonucleoside 5'-diphosphate + ATP = a 2'-deoxyribonucleoside 5'-triphosphate + ADP. The catalysed reaction is a ribonucleoside 5'-diphosphate + ATP = a ribonucleoside 5'-triphosphate + ADP. Its function is as follows. Major role in the synthesis of nucleoside triphosphates other than ATP. The ATP gamma phosphate is transferred to the NDP beta phosphate via a ping-pong mechanism, using a phosphorylated active-site intermediate. This Sinorhizobium medicae (strain WSM419) (Ensifer medicae) protein is Nucleoside diphosphate kinase.